Consider the following 311-residue polypeptide: Chalcone synthase 4 (311 aa).

Residue Cys-164 is part of the active site.

Belongs to the thiolase-like superfamily. Chalcone/stilbene synthases family.

The catalysed reaction is (E)-4-coumaroyl-CoA + 3 malonyl-CoA + 3 H(+) = 2',4,4',6'-tetrahydroxychalcone + 3 CO2 + 4 CoA. Its pathway is secondary metabolite biosynthesis; flavonoid biosynthesis. Its function is as follows. The primary product of this enzyme is 4,2',4',6'-tetrahydroxychalcone (also termed naringenin-chalcone or chalcone) which can under specific conditions spontaneously isomerize into naringenin. This is Chalcone synthase 4 (CHS4) from Trifolium subterraneum (Subterranean clover).